The following is a 780-amino-acid chain: Translation initiation factor IF-2 (780 aa).

Residues 24–194 (AEEKGFPVKN…KGAPERKNKA (171 aa)) form a disordered region. Polar residues-rich tracts occupy residues 59 to 71 (EQSA…QRKV) and 80 to 90 (QGTARTQTTAQ). Composition is skewed to low complexity over residues 98–114 (NQTQ…QTGN) and 132–158 (NNNT…SRNN). A compositionally biased stretch (basic residues) spans 159–176 (RNNRRRNNNNNNRYKKNQ). A compositionally biased stretch (basic and acidic residues) spans 177 to 194 (RIKDTNQHKGAPERKNKA). In terms of domain architecture, tr-type G spans 281–450 (PRAPVVTIMG…LLQSDVLELK (170 aa)). The tract at residues 290–297 (GHVDHGKT) is G1. GTP is bound at residue 290–297 (GHVDHGKT). The interval 315–319 (GITQA) is G2. A G3 region spans residues 336 to 339 (DTPG). GTP contacts are provided by residues 336–340 (DTPGH) and 390–393 (NKID). Positions 390–393 (NKID) are G4. A G5 region spans residues 426–428 (SAK).

Belongs to the TRAFAC class translation factor GTPase superfamily. Classic translation factor GTPase family. IF-2 subfamily.

Its subcellular location is the cytoplasm. One of the essential components for the initiation of protein synthesis. Protects formylmethionyl-tRNA from spontaneous hydrolysis and promotes its binding to the 30S ribosomal subunits. Also involved in the hydrolysis of GTP during the formation of the 70S ribosomal complex. This is Translation initiation factor IF-2 from Levilactobacillus brevis (strain ATCC 367 / BCRC 12310 / CIP 105137 / JCM 1170 / LMG 11437 / NCIMB 947 / NCTC 947) (Lactobacillus brevis).